The following is a 190-amino-acid chain: RNA pyrophosphohydrolase (190 aa).

A Nudix hydrolase domain is found at Gly6–Asn149. The Nudix box motif lies at Gly38–Gly59. Positions Gln167–Gly190 are disordered.

Belongs to the Nudix hydrolase family. RppH subfamily. It depends on a divalent metal cation as a cofactor.

Functionally, accelerates the degradation of transcripts by removing pyrophosphate from the 5'-end of triphosphorylated RNA, leading to a more labile monophosphorylated state that can stimulate subsequent ribonuclease cleavage. The protein is RNA pyrophosphohydrolase of Bordetella parapertussis (strain 12822 / ATCC BAA-587 / NCTC 13253).